The chain runs to 209 residues: NADH-quinone oxidoreductase subunit C (209 aa).

Belongs to the complex I 30 kDa subunit family. In terms of assembly, NDH-1 is composed of 14 different subunits. Subunits NuoB, C, D, E, F, and G constitute the peripheral sector of the complex.

The protein resides in the cell inner membrane. It carries out the reaction a quinone + NADH + 5 H(+)(in) = a quinol + NAD(+) + 4 H(+)(out). Functionally, NDH-1 shuttles electrons from NADH, via FMN and iron-sulfur (Fe-S) centers, to quinones in the respiratory chain. The immediate electron acceptor for the enzyme in this species is believed to be ubiquinone. Couples the redox reaction to proton translocation (for every two electrons transferred, four hydrogen ions are translocated across the cytoplasmic membrane), and thus conserves the redox energy in a proton gradient. This chain is NADH-quinone oxidoreductase subunit C, found in Xanthobacter autotrophicus (strain ATCC BAA-1158 / Py2).